Here is a 231-residue protein sequence, read N- to C-terminus: N-acetylmuramate alpha-1-phosphate uridylyltransferase (231 aa).

Residues 11 to 13 and lysine 23 each bind UTP; that span reads GER. Substrate is bound at residue asparagine 106. Residue aspartate 108 participates in Mg(2+) binding. Residues aspartate 146 and aspartate 213 each contribute to the substrate site. Aspartate 213 provides a ligand contact to Mg(2+).

This sequence belongs to the nucleotidyltransferase MurU family. As to quaternary structure, monomer. Requires Mg(2+) as cofactor.

The enzyme catalyses N-acetyl-alpha-D-muramate 1-phosphate + UDP + H(+) = UDP-N-acetyl-alpha-D-muramate + phosphate. It functions in the pathway cell wall biogenesis; peptidoglycan recycling. In terms of biological role, catalyzes the formation of UDP-N-acetylmuramate (UDP-MurNAc), a crucial precursor of the bacterial peptidoglycan cell wall, from UTP and MurNAc-alpha-1P. Is likely involved in peptidoglycan recycling as part of a cell wall recycling pathway that bypasses de novo biosynthesis of the peptidoglycan precursor UDP-MurNAc. Is able to complement the fosfomycin sensitivity phenotype of a P.putida mutant lacking murU. The chain is N-acetylmuramate alpha-1-phosphate uridylyltransferase from Neisseria meningitidis serogroup B (strain ATCC BAA-335 / MC58).